The chain runs to 191 residues: MADLRILVSIILMTNAVLEKGGCTGPPGPPGHPGPPGIRGPPGIRGIPGLPGPPGTPGPSVKCPCHRQSAFTVKLSGQLPSPSKPVPFTEVLYNAQRDLQEDTGVFTCRVPGNYHFLFDVDLHHCKVTVQLMRDKSSVLEKHQVSTKEPRSLSGMLTLPLHVGEKVWLEAKVETEKPEQARVTIYFSGFLT.

Positions methionine 1–alanine 16 are cleaved as a signal peptide. A Collagen-like domain is found at glycine 22–glycine 58. Residues glycine 22–valine 61 are disordered. Residues proline 26–arginine 39 show a composition bias toward pro residues. A C1q domain is found at proline 64–threonine 191.

Its subcellular location is the secreted. The sequence is that of Protein HP-20 homolog from Bos taurus (Bovine).